Consider the following 79-residue polypeptide: RNA-binding protein Hfq (79 aa).

The 61-residue stretch at 9 to 69 folds into the Sm domain; the sequence is DTFLNHLRKE…ISTFTPQRPV (61 aa).

Belongs to the Hfq family. In terms of assembly, homohexamer.

In terms of biological role, RNA chaperone that binds small regulatory RNA (sRNAs) and mRNAs to facilitate mRNA translational regulation in response to envelope stress, environmental stress and changes in metabolite concentrations. Also binds with high specificity to tRNAs. This Brevibacillus brevis (strain 47 / JCM 6285 / NBRC 100599) protein is RNA-binding protein Hfq.